Consider the following 173-residue polypeptide: Ribosome maturation factor RimM (173 aa).

In terms of domain architecture, PRC barrel spans 95–173 (EGEYYWRQLE…LMVVDWDPDF (79 aa)).

The protein belongs to the RimM family. In terms of assembly, binds ribosomal protein uS19.

The protein resides in the cytoplasm. An accessory protein needed during the final step in the assembly of 30S ribosomal subunit, possibly for assembly of the head region. Essential for efficient processing of 16S rRNA. May be needed both before and after RbfA during the maturation of 16S rRNA. It has affinity for free ribosomal 30S subunits but not for 70S ribosomes. This Hahella chejuensis (strain KCTC 2396) protein is Ribosome maturation factor RimM.